The primary structure comprises 138 residues: Acidic phospholipase A2 daboiatoxin A chain (138 aa).

Positions 1 to 16 (MRTLWIMAVCLIGVEG) are cleaved as a signal peptide. Intrachain disulfides connect Cys42–Cys131, Cys44–Cys60, Cys59–Cys111, Cys65–Cys138, Cys66–Cys104, Cys73–Cys97, and Cys91–Cys102. Residues Tyr43, Gly45, and Gly47 each coordinate Ca(2+). His63 is a catalytic residue. Ca(2+) is bound at residue Asp64. The active site involves Asp105.

The protein belongs to the phospholipase A2 family. Group II subfamily. D49 sub-subfamily. As to quaternary structure, heterodimer of A and B chain; non-covalently linked. The acidic protein (B chain) has phospholipase A2 activity and the A chain weakly inhibits the B chain enzymatic activity but potentiates its lethal potency. Requires Ca(2+) as cofactor. In terms of tissue distribution, expressed by the venom gland.

Its subcellular location is the secreted. The catalysed reaction is a 1,2-diacyl-sn-glycero-3-phosphocholine + H2O = a 1-acyl-sn-glycero-3-phosphocholine + a fatty acid + H(+). Heterodimer (A and B chains): phospholipase A2 that acts as a presynaptic neurotoxin and shows a PLA2 activity of 1377 umol/min/mg. In vivo, induces edema and produces neurotoxic symptoms in mice. Also exhibits indirect hemolysis, a strong myonecrotic activity and cytotoxicity. PLA2 catalyzes the calcium-dependent hydrolysis of the 2-acyl groups in 3-sn-phosphoglycerides. In terms of biological role, monomer: Snake venom phospholipase A2 (PLA2) that shows a PLA2 activity of 578 umol/min/mg. The sequence is that of Acidic phospholipase A2 daboiatoxin A chain from Daboia siamensis (Eastern Russel's viper).